A 789-amino-acid polypeptide reads, in one-letter code: MARGTFERTKKLREESINAEPHISIERAVLMTEAYKKYEGSVEIPVLRALSFKHYIENRTLSINDGELIVGEKGDSPNGAPTYPEICCHTMEDLEVMHNRDIINFSVSEEARKIHKEEIIPFWKKRQTRDKIINAMTPEWLAAYEAGMFTEFMEQRAPGHTVCGDTIYKKGFLDLKKDIEARLKELDFLNDLDAYNKKADLEAMAIACDAMVILGKRYAEKARQMAEEETDEAKKKDLLLIAETCDVVPAHKPETYHQAIQMYWFVHIGVTTELNIWDAFTPGRLDQHLNPFYERDVENGILDRDRAQELLECLWVKFNNQPAPPKVGITLKESSTYTDFANINTGGINPDGQDGVNEVSYIILDVMDEMKLIQPSSNVQISKKTPQKFLKRACEISRKGWGQPAFYNTEAIVQELMEAGKTIEDARLGGTSGCVETGCFGKEAYVLTGYMNIPKILELTLNNGYDPISKKQIGIETGDPRNFQSYEELFEAFKKQLHYMIDIKIEGNAVIENICAKHMPCPLMSTIVDDCIEKGKDYQRGGARYNTRYIQGVGIGTITDSLTAIKYNVFDKKKFDMDTLLKALDANFEGYEAILNLVSNKTPKYGNDDDYADEIMQEIFNAYYNEVTGRPTVCGGEYRVDMLPTTCHIYFGEIMGASPNGRLCAKPVSEGISPEKGGDTNGPTAVIKSCAKMDHIKTGGTLLNQRFAPSVVQGEKGLDNMANLVRAYFNMDGHHIQFNVFDKNVLLEAQKNPQDYKDLIVRVAGYSDHFNNLSRTLQDEIIGRTEQTF.

The PFL domain maps to 7-663 (ERTKKLREES…IMGASPNGRL (657 aa)). Cysteine 434 functions as the Cysteine radical intermediate in the catalytic mechanism. The Proton acceptor role is filled by glutamate 436. A Glycine radical domain is found at 670–789 (EGISPEKGGD…EIIGRTEQTF (120 aa)). A Glycine radical modification is found at glycine 765.

The protein belongs to the glycyl radical enzyme (GRE) family. HYPD subfamily. Post-translationally, requires the activating protein PflE to generate the key active site glycyl radical on Gly-765 that is involved in catalysis.

The catalysed reaction is trans-4-hydroxy-L-proline = (S)-1-pyrroline-5-carboxylate + H2O + H(+). In terms of biological role, glycine radical enzyme that catalyzes the dehydration of the non-proteinogenic amino acid trans-4-hydroxy-L-proline (Hyp) to produce delta(1)-pyrroline-5-carboxylate (P5C). Is involved in the anaerobic degradation of 4-hydroxyproline. The chain is Trans-4-hydroxy-L-proline dehydratase from Clostridioides difficile (Peptoclostridium difficile).